We begin with the raw amino-acid sequence, 271 residues long: Formamidopyrimidine-DNA glycosylase (271 aa).

P2 serves as the catalytic Schiff-base intermediate with DNA. E3 serves as the catalytic Proton donor. K56 functions as the Proton donor; for beta-elimination activity in the catalytic mechanism. H89, R107, and R151 together coordinate DNA. Residues 236-270 (MVYARQGQPCRVCATPIKSLRQGQRSTFYCPHCQK) form an FPG-type zinc finger. Catalysis depends on R260, which acts as the Proton donor; for delta-elimination activity.

It belongs to the FPG family. In terms of assembly, monomer. It depends on Zn(2+) as a cofactor.

The catalysed reaction is Hydrolysis of DNA containing ring-opened 7-methylguanine residues, releasing 2,6-diamino-4-hydroxy-5-(N-methyl)formamidopyrimidine.. The enzyme catalyses 2'-deoxyribonucleotide-(2'-deoxyribose 5'-phosphate)-2'-deoxyribonucleotide-DNA = a 3'-end 2'-deoxyribonucleotide-(2,3-dehydro-2,3-deoxyribose 5'-phosphate)-DNA + a 5'-end 5'-phospho-2'-deoxyribonucleoside-DNA + H(+). In terms of biological role, involved in base excision repair of DNA damaged by oxidation or by mutagenic agents. Acts as a DNA glycosylase that recognizes and removes damaged bases. Has a preference for oxidized purines, such as 7,8-dihydro-8-oxoguanine (8-oxoG). Has AP (apurinic/apyrimidinic) lyase activity and introduces nicks in the DNA strand. Cleaves the DNA backbone by beta-delta elimination to generate a single-strand break at the site of the removed base with both 3'- and 5'-phosphates. The protein is Formamidopyrimidine-DNA glycosylase of Albidiferax ferrireducens (strain ATCC BAA-621 / DSM 15236 / T118) (Rhodoferax ferrireducens).